The sequence spans 252 residues: 4-formylbenzenesulfonate dehydrogenase TsaC1/TsaC2 (252 aa).

NAD(+) is bound by residues 9-36 (IVTG…LVAD) and aspartate 62. Residue serine 142 coordinates substrate. The Proton acceptor role is filled by tyrosine 155. Lysine 159 contacts NAD(+).

Belongs to the short-chain dehydrogenases/reductases (SDR) family. Homodimer.

It carries out the reaction 4-formylbenzenesulfonate + NAD(+) + H2O = 4-sulfobenzoate + NADH + 2 H(+). Functionally, involved in the toluene-4-sulfonate degradation pathway. Does not discriminate between the sulfonate and the carboxyl substituents and can also be involved in the p-toluenecarboxylate degradation pathway. This Comamonas testosteroni (Pseudomonas testosteroni) protein is 4-formylbenzenesulfonate dehydrogenase TsaC1/TsaC2 (tsaC1).